The primary structure comprises 462 residues: 3-isopropylmalate dehydratase large subunit (462 aa).

Positions 337, 397, and 400 each coordinate [4Fe-4S] cluster.

Belongs to the aconitase/IPM isomerase family. LeuC type 1 subfamily. In terms of assembly, heterodimer of LeuC and LeuD. Requires [4Fe-4S] cluster as cofactor.

It carries out the reaction (2R,3S)-3-isopropylmalate = (2S)-2-isopropylmalate. Its pathway is amino-acid biosynthesis; L-leucine biosynthesis; L-leucine from 3-methyl-2-oxobutanoate: step 2/4. Catalyzes the isomerization between 2-isopropylmalate and 3-isopropylmalate, via the formation of 2-isopropylmaleate. The chain is 3-isopropylmalate dehydratase large subunit from Listeria innocua serovar 6a (strain ATCC BAA-680 / CLIP 11262).